The following is a 326-amino-acid chain: ATP-dependent 6-phosphofructokinase (326 aa).

Glycine 12 is a binding site for ATP. 22–26 (RAIIK) provides a ligand contact to ADP. Residues 73–74 (RF) and 103–106 (GDGS) each bind ATP. Aspartate 104 serves as a coordination point for Mg(2+). 126–128 (TID) is a binding site for substrate. Aspartate 128 (proton acceptor) is an active-site residue. Arginine 155 contacts ADP. Residues arginine 163 and 170–172 (MGH) contribute to the substrate site. Residues 186–188 (GSE), lysine 212, and 215–217 (KRS) each bind ADP. Substrate is bound by residues glutamate 224, lysine 246, and 252-255 (HIQR).

The protein belongs to the phosphofructokinase type A (PFKA) family. ATP-dependent PFK group I subfamily. Prokaryotic clade 'B1' sub-subfamily. Homotetramer. Mg(2+) serves as cofactor.

It is found in the cytoplasm. The enzyme catalyses beta-D-fructose 6-phosphate + ATP = beta-D-fructose 1,6-bisphosphate + ADP + H(+). It functions in the pathway carbohydrate degradation; glycolysis; D-glyceraldehyde 3-phosphate and glycerone phosphate from D-glucose: step 3/4. With respect to regulation, allosterically activated by ADP and other diphosphonucleosides, and allosterically inhibited by phosphoenolpyruvate. Its function is as follows. Catalyzes the phosphorylation of D-fructose 6-phosphate to fructose 1,6-bisphosphate by ATP, the first committing step of glycolysis. In Mycoplasmopsis pulmonis (strain UAB CTIP) (Mycoplasma pulmonis), this protein is ATP-dependent 6-phosphofructokinase.